We begin with the raw amino-acid sequence, 202 residues long: Putative pituitary tumor-transforming gene 3 protein (202 aa).

The short motif at 61-64 is the D-box element; it reads RKAL. The SH3-binding motif lies at 163–173; sequence PPSPLKMPSPP.

The protein belongs to the securin family.

It localises to the cytoplasm. The protein localises to the nucleus. This Pan troglodytes (Chimpanzee) protein is Putative pituitary tumor-transforming gene 3 protein (PTTG3).